We begin with the raw amino-acid sequence, 688 residues long: Coiled-coil domain-containing protein 157 (688 aa).

Over residues 143–153 the composition is skewed to polar residues; that stretch reads ANQGETLTSKP. Disordered regions lie at residues 143-162, 168-189, 322-341, 366-385, and 592-688; these read ANQG…PAGS, AQLV…ERDS, QAAR…QWER, QQRE…QAEA, and QGAE…ERPT. A coiled-coil region spans residues 288 to 572; sequence KLVGLLRAQL…LSKIREVAQQ (285 aa). Positions 369–382 are enriched in polar residues; it reads ESTQAVESKAQQLQ. Positions 671 to 680 are enriched in low complexity; it reads SPSSGRASPA.

In Bos taurus (Bovine), this protein is Coiled-coil domain-containing protein 157 (CCDC157).